We begin with the raw amino-acid sequence, 333 residues long: Ketol-acid reductoisomerase (NADP(+)) (333 aa).

One can recognise a KARI N-terminal Rossmann domain in the interval 2–182 (AKMYYDSDAS…GCTRAGVLET (181 aa)). Residues 25–28 (YGSQ), Arg-48, Ser-51, and 83–86 (DERQ) contribute to the NADP(+) site. Residue His-108 is part of the active site. Gly-134 is an NADP(+) binding site. Residues 183–328 (TFKEETETDL…AELRAMMPFI (146 aa)) enclose the KARI C-terminal knotted domain. Asp-191, Glu-195, Glu-227, and Glu-231 together coordinate Mg(2+). Position 252 (Ser-252) interacts with substrate.

The protein belongs to the ketol-acid reductoisomerase family. Mg(2+) serves as cofactor.

It catalyses the reaction (2R)-2,3-dihydroxy-3-methylbutanoate + NADP(+) = (2S)-2-acetolactate + NADPH + H(+). It carries out the reaction (2R,3R)-2,3-dihydroxy-3-methylpentanoate + NADP(+) = (S)-2-ethyl-2-hydroxy-3-oxobutanoate + NADPH + H(+). It participates in amino-acid biosynthesis; L-isoleucine biosynthesis; L-isoleucine from 2-oxobutanoate: step 2/4. The protein operates within amino-acid biosynthesis; L-valine biosynthesis; L-valine from pyruvate: step 2/4. In terms of biological role, involved in the biosynthesis of branched-chain amino acids (BCAA). Catalyzes an alkyl-migration followed by a ketol-acid reduction of (S)-2-acetolactate (S2AL) to yield (R)-2,3-dihydroxy-isovalerate. In the isomerase reaction, S2AL is rearranged via a Mg-dependent methyl migration to produce 3-hydroxy-3-methyl-2-ketobutyrate (HMKB). In the reductase reaction, this 2-ketoacid undergoes a metal-dependent reduction by NADPH to yield (R)-2,3-dihydroxy-isovalerate. This is Ketol-acid reductoisomerase (NADP(+)) from Desulfitobacterium hafniense (strain DSM 10664 / DCB-2).